The primary structure comprises 368 residues: Chorismate synthase (368 aa).

NADP(+) contacts are provided by Arg48 and Arg54. Residues 125 to 127, 238 to 239, Gly278, 293 to 297, and Arg319 each bind FMN; these read RSS, NA, and KPTSS.

This sequence belongs to the chorismate synthase family. In terms of assembly, homotetramer. The cofactor is FMNH2.

The enzyme catalyses 5-O-(1-carboxyvinyl)-3-phosphoshikimate = chorismate + phosphate. It participates in metabolic intermediate biosynthesis; chorismate biosynthesis; chorismate from D-erythrose 4-phosphate and phosphoenolpyruvate: step 7/7. Its function is as follows. Catalyzes the anti-1,4-elimination of the C-3 phosphate and the C-6 proR hydrogen from 5-enolpyruvylshikimate-3-phosphate (EPSP) to yield chorismate, which is the branch point compound that serves as the starting substrate for the three terminal pathways of aromatic amino acid biosynthesis. This reaction introduces a second double bond into the aromatic ring system. The polypeptide is Chorismate synthase (Methylibium petroleiphilum (strain ATCC BAA-1232 / LMG 22953 / PM1)).